The following is a 284-amino-acid chain: Orotidine 5'-phosphate decarboxylase (284 aa).

Substrate contacts are provided by residues aspartate 42, 64-66 (KTH), 96-105 (DRKFADIGNT), tyrosine 237, and arginine 255. Lysine 98 (proton donor) is an active-site residue.

This sequence belongs to the OMP decarboxylase family.

The enzyme catalyses orotidine 5'-phosphate + H(+) = UMP + CO2. It functions in the pathway pyrimidine metabolism; UMP biosynthesis via de novo pathway; UMP from orotate: step 2/2. This Magnusiomyces magnusii (Yeast) protein is Orotidine 5'-phosphate decarboxylase (URA3).